We begin with the raw amino-acid sequence, 403 residues long: MPLAKLCAKKLSSPLMKLCYPNLNGKLPFSNLSNILDNSSLKFHSCNPHITCRGLSTVALRPQTITKDDKRDFMAVFPDIVRDLTQLNPGISDLSTLISKIMQYNVSGGKKVRGLTVVYSYRMLAPDHALTPENIRLAQILGWCVEMLQGFFLVIDDLADQSITRRGRPCWYRNPDVGLRAGSDALLIQSGTFQLLQQHCKDREFYIDLVELFLDAVRRTTYGQTLDHVSSFPNITHLTMDRYNFITKYKTSYYTFHLPVATAMYMAGIYNTELHRQAKSVLLEMGHYFQVQDDYLDVFGDEEVIGKIGTDIQEGKCTWLAIVAFQRASPSQREILESCYGSKDPEKIKKVKDTFIEIGVPAVFHAYEEETYNLITRQIQQLSQGLPHELFLTLLHKTYGRKQ.

Residues aspartate 156 and aspartate 160 each coordinate Mg(2+). The short motif at 156 to 160 (DDLAD) is the DDXXD motif element.

This sequence belongs to the FPP/GGPP synthase family. It depends on Mg(2+) as a cofactor.

It catalyses the reaction isopentenyl diphosphate + (2E)-geranyl diphosphate = (2Z,6E)-farnesyl diphosphate + diphosphate. The protein operates within pheromone biosynthesis. Functionally, farnesyl pyrophosphate synthase involved in pheromone biosynthesis by catalyzing the formation of (2Z,6E)-farnesyl diphosphate. This chain is Farnesyl pyrophosphate synthase, found in Nezara viridula (Southern green stink bug).